The sequence spans 621 residues: tRNA uridine 5-carboxymethylaminomethyl modification enzyme MnmG (621 aa).

9 to 14 lines the FAD pocket; it reads GGGHAG. 268–282 is a binding site for NAD(+); that stretch reads GPRYCPSIEDKINRF.

The protein belongs to the MnmG family. Homodimer. Heterotetramer of two MnmE and two MnmG subunits. FAD is required as a cofactor.

Its subcellular location is the cytoplasm. In terms of biological role, NAD-binding protein involved in the addition of a carboxymethylaminomethyl (cmnm) group at the wobble position (U34) of certain tRNAs, forming tRNA-cmnm(5)s(2)U34. This is tRNA uridine 5-carboxymethylaminomethyl modification enzyme MnmG from Campylobacter fetus subsp. fetus (strain 82-40).